Here is a 245-residue protein sequence, read N- to C-terminus: Adenylate kinase (245 aa).

15-20 is an ATP binding site; sequence GSGKGT. Residues 35 to 64 form an NMP region; it reads SSGDLLRGAVSKDTPLSQEIKSYLDQGKLL. AMP contacts are provided by residues S36, R41, 62–64, 103–106, and Q110; these read KLL and GFPR. An LID region spans residues 143–176; it reads SRYICPACQGIYNEQQGFSSCPKCSVELIRRSDD. ATP is bound at residue R144. C147 and C150 together coordinate Zn(2+). An ATP-binding site is contributed by 153–154; that stretch reads IY. Zn(2+) contacts are provided by C163 and C166. Positions 173 and 184 each coordinate AMP. Position 212 (A212) interacts with ATP.

Belongs to the adenylate kinase family. As to quaternary structure, monomer.

Its subcellular location is the cytoplasm. It catalyses the reaction AMP + ATP = 2 ADP. It functions in the pathway purine metabolism; AMP biosynthesis via salvage pathway; AMP from ADP: step 1/1. Catalyzes the reversible transfer of the terminal phosphate group between ATP and AMP. Plays an important role in cellular energy homeostasis and in adenine nucleotide metabolism. The sequence is that of Adenylate kinase from Chlamydia trachomatis serovar L2 (strain ATCC VR-902B / DSM 19102 / 434/Bu).